Here is a 597-residue protein sequence, read N- to C-terminus: Glutamine--fructose-6-phosphate aminotransferase [isomerizing] (597 aa).

Cys-2 serves as the catalytic Nucleophile; for GATase activity. Positions Cys-2–Glu-218 constitute a Glutamine amidotransferase type-2 domain. SIS domains lie at Ile-276–Thr-416 and Leu-449–Pro-587. Lys-592 (for Fru-6P isomerization activity) is an active-site residue.

Homodimer.

Its subcellular location is the cytoplasm. It carries out the reaction D-fructose 6-phosphate + L-glutamine = D-glucosamine 6-phosphate + L-glutamate. Catalyzes the first step in hexosamine metabolism, converting fructose-6P into glucosamine-6P using glutamine as a nitrogen source. The sequence is that of Glutamine--fructose-6-phosphate aminotransferase [isomerizing] from Helicobacter pylori (strain J99 / ATCC 700824) (Campylobacter pylori J99).